A 118-amino-acid chain; its full sequence is DNA-binding protein Msp_0595 (118 aa).

A compositionally biased stretch (low complexity) spans 15–44 (LKQQQLAAQQQQGASLEQMQQEEQARQQFE). The interval 15-45 (LKQQQLAAQQQQGASLEQMQQEEQARQQFEN) is disordered.

This sequence belongs to the PDCD5 family.

The protein is DNA-binding protein Msp_0595 of Methanosphaera stadtmanae (strain ATCC 43021 / DSM 3091 / JCM 11832 / MCB-3).